A 379-amino-acid polypeptide reads, in one-letter code: Cyclic di-GMP phosphodiesterase PdeB (379 aa).

One can recognise an HD-GYP domain in the interval 114 to 310 (FYKKQKKIFI…PLDFIVELND (197 aa)).

Mn(2+) is required as a cofactor.

It carries out the reaction 3',3'-c-di-GMP + 2 H2O = 2 GMP + 2 H(+). In terms of biological role, phosphodiesterase (PDE) that catalyzes the hydrolysis of cyclic diguanylate (c-di-GMP) to GMP. The protein is Cyclic di-GMP phosphodiesterase PdeB of Borreliella burgdorferi (strain ATCC 35210 / DSM 4680 / CIP 102532 / B31) (Borrelia burgdorferi).